The sequence spans 891 residues: Transportin-1 (891 aa).

HEAT repeat units lie at residues 14-40 (GLRE…QQLQ), 45-83 (FPDF…ATFS), 92-125 (YVKS…IVRV), 131-168 (LFQA…LDVD), 178-208 (NVFM…QYIV), 221-248 (YLQG…VQLI), 260-287 (KNVT…FWSA), 303-381 (PRLI…LSNV), 389-420 (TLMP…GAIA), 432-459 (PQIV…TLSR), 477-510 (FDKI…EEEA), 518-551 (LGII…ADAV), 559-597 (KYLD…QALG), 605-653 (EPVF…GLGA), 664-695 (LRDI…RVCP), 703-740 (QEFL…IKIG), 748-784 (ITVV…WVCP), 792-825 (DHFM…VAAN), and 834-866 (TFIC…KQML). Residues 35 to 103 (IWQQLQHYSQ…KSELLPCIGA (69 aa)) enclose the Importin N-terminal domain. Positions 317–330 (DDDESLADAEEDES) are enriched in acidic residues. Residues 317 to 337 (DDDESLADAEEDESFPDRDQD) are disordered.

Belongs to the importin beta family. Importin beta-2 subfamily.

It localises to the cytoplasm. The protein localises to the nucleus. The protein resides in the nucleoplasm. Functionally, functions in nuclear protein import as nuclear transport receptor. Serves as receptor for nuclear localization signals (NLS) in cargo substrates. Is thought to mediate docking of the importin/substrate complex to the nuclear pore complex (NPC) through binding to nucleoporin and the complex is subsequently translocated through the pore by an energy requiring, Ran-dependent mechanism. At the nucleoplasmic side of the NPC, Ran binds to the importin, the importin/substrate complex dissociates and importin is re-exported from the nucleus to the cytoplasm where GTP hydrolysis releases Ran. The directionality of nuclear import is thought to be conferred by an asymmetric distribution of the GTP- and GDP-bound forms of Ran between the cytoplasm and nucleus. The polypeptide is Transportin-1 (TRN1) (Oryza sativa subsp. japonica (Rice)).